A 218-amino-acid chain; its full sequence is Peptidase E (218 aa).

Residues Ser123, Asp138, and His160 each act as charge relay system in the active site.

This sequence belongs to the peptidase S51 family.

It is found in the cytoplasm. The enzyme catalyses Dipeptidase E catalyzes the hydrolysis of dipeptides Asp-|-Xaa. It does not act on peptides with N-terminal Glu, Asn or Gln, nor does it cleave isoaspartyl peptides.. Hydrolyzes dipeptides containing N-terminal aspartate residues. May play a role in allowing the cell to use peptide aspartate to spare carbon otherwise required for the synthesis of the aspartate family of amino acids. The chain is Peptidase E from Haemophilus influenzae (strain ATCC 51907 / DSM 11121 / KW20 / Rd).